A 43-amino-acid chain; its full sequence is MKLLNFILIIFNALKSRHLIRCLDSKCHKLFPLLEVNKSTTSL.

The N-terminal stretch at 1–16 is a signal peptide; that stretch reads MKLLNFILIIFNALKS. N-linked (GlcNAc...) asparagine; by host glycosylation occurs at Asn37.

This is an uncharacterized protein from Acheta domesticus (House cricket).